A 189-amino-acid polypeptide reads, in one-letter code: Peptidyl-tRNA hydrolase (189 aa).

Tyrosine 15 serves as a coordination point for tRNA. Histidine 20 (proton acceptor) is an active-site residue. 3 residues coordinate tRNA: tyrosine 64, asparagine 66, and asparagine 112.

This sequence belongs to the PTH family. As to quaternary structure, monomer.

It localises to the cytoplasm. It carries out the reaction an N-acyl-L-alpha-aminoacyl-tRNA + H2O = an N-acyl-L-amino acid + a tRNA + H(+). Functionally, hydrolyzes ribosome-free peptidyl-tRNAs (with 1 or more amino acids incorporated), which drop off the ribosome during protein synthesis, or as a result of ribosome stalling. In terms of biological role, catalyzes the release of premature peptidyl moieties from peptidyl-tRNA molecules trapped in stalled 50S ribosomal subunits, and thus maintains levels of free tRNAs and 50S ribosomes. The sequence is that of Peptidyl-tRNA hydrolase from Sulfurihydrogenibium sp. (strain YO3AOP1).